The sequence spans 350 residues: Phenylalanine--tRNA ligase alpha subunit (350 aa).

E262 contacts Mg(2+).

This sequence belongs to the class-II aminoacyl-tRNA synthetase family. Phe-tRNA synthetase alpha subunit type 1 subfamily. In terms of assembly, tetramer of two alpha and two beta subunits. Requires Mg(2+) as cofactor.

The protein localises to the cytoplasm. It carries out the reaction tRNA(Phe) + L-phenylalanine + ATP = L-phenylalanyl-tRNA(Phe) + AMP + diphosphate + H(+). In Thermus thermophilus (strain ATCC 27634 / DSM 579 / HB8), this protein is Phenylalanine--tRNA ligase alpha subunit (pheS).